The chain runs to 64 residues: Large ribosomal subunit protein bL33 (64 aa).

It belongs to the bacterial ribosomal protein bL33 family.

The sequence is that of Large ribosomal subunit protein bL33 from Rippkaea orientalis (strain PCC 8801 / RF-1) (Cyanothece sp. (strain PCC 8801)).